A 151-amino-acid polypeptide reads, in one-letter code: 18 kDa heat shock protein (151 aa).

In terms of domain architecture, sHSP spans Thr38 to His151.

The protein belongs to the small heat shock protein (HSP20) family.

Functionally, probable chaperone. The protein is 18 kDa heat shock protein (hsp18) of Clostridium acetobutylicum (strain ATCC 824 / DSM 792 / JCM 1419 / IAM 19013 / LMG 5710 / NBRC 13948 / NRRL B-527 / VKM B-1787 / 2291 / W).